The primary structure comprises 143 residues: Large-conductance mechanosensitive channel (143 aa).

The next 2 membrane-spanning stretches (helical) occupy residues 16–36 (VIDL…VTAL) and 84–104 (INTV…VKLI).

The protein belongs to the MscL family. As to quaternary structure, homopentamer.

Its subcellular location is the cell inner membrane. In terms of biological role, channel that opens in response to stretch forces in the membrane lipid bilayer. May participate in the regulation of osmotic pressure changes within the cell. The sequence is that of Large-conductance mechanosensitive channel from Xanthomonas campestris pv. campestris (strain 8004).